The sequence spans 180 residues: Putative protein 33K (180 aa).

The disordered stretch occupies residues 31-108 (LEEAYKQLEK…AKAPRNYGTP (78 aa)). The span at 33–43 (EAYKQLEKELG) shows a compositional bias: basic and acidic residues. Positions 60–78 (PLSEGELEEISEEEEEEGE) are enriched in acidic residues.

The protein is Putative protein 33K of Pantherophis guttatus (Corn snake).